Consider the following 154-residue polypeptide: Myoglobin (154 aa).

In terms of domain architecture, Globin spans 2 to 148 (GLSDQEWQQV…FRNDMASKYK (147 aa)). His65 serves as a coordination point for nitrite. O2 is bound at residue His65. His94 provides a ligand contact to heme b.

In terms of assembly, monomeric.

It localises to the cytoplasm. It is found in the sarcoplasm. The catalysed reaction is Fe(III)-heme b-[protein] + nitric oxide + H2O = Fe(II)-heme b-[protein] + nitrite + 2 H(+). It catalyses the reaction H2O2 + AH2 = A + 2 H2O. Monomeric heme protein which primary function is to store oxygen and facilitate its diffusion within muscle tissues. Reversibly binds oxygen through a pentacoordinated heme iron and enables its timely and efficient release as needed during periods of heightened demand. Depending on the oxidative conditions of tissues and cells, and in addition to its ability to bind oxygen, it also has a nitrite reductase activity whereby it regulates the production of bioactive nitric oxide. Under stress conditions, like hypoxia and anoxia, it also protects cells against reactive oxygen species thanks to its pseudoperoxidase activity. The protein is Myoglobin (MB) of Struthio camelus (Common ostrich).